Here is a 155-residue protein sequence, read N- to C-terminus: Deoxyuridine 5'-triphosphate nucleotidohydrolase (155 aa).

Residues 74–76 (RSG), Asn87, and 91–93 (LID) contribute to the substrate site.

This sequence belongs to the dUTPase family. Mg(2+) serves as cofactor.

The catalysed reaction is dUTP + H2O = dUMP + diphosphate + H(+). It participates in pyrimidine metabolism; dUMP biosynthesis; dUMP from dCTP (dUTP route): step 2/2. This enzyme is involved in nucleotide metabolism: it produces dUMP, the immediate precursor of thymidine nucleotides and it decreases the intracellular concentration of dUTP so that uracil cannot be incorporated into DNA. The sequence is that of Deoxyuridine 5'-triphosphate nucleotidohydrolase from Xanthomonas axonopodis pv. citri (strain 306).